We begin with the raw amino-acid sequence, 182 residues long: Functional amyloid subunit FapB (182 aa).

Positions 1 to 18 are cleaved as a signal peptide; sequence MTHSWLLLTVLGCSAAMA. The FapB_R1 repeat unit spans residues 22-58; it reads NQALIDNAGKQYTGVLSVNQAAGNQHQQINSRAISLG. One copy of the FapB_R2 repeat lies at 80–114; sequence SAAIQGSAFSNGNGILGVNQSAGANNQMINAVRIS. One copy of the FapB_R3 repeat lies at 150 to 180; sequence SDQAFTGSRGVVQVNQSAGVGNRMANTLGVT.

Belongs to the FapB/FapC family. In terms of assembly, forms fibrils in vitro; in the presence of FapA the fibrils are slightly narrower. A minor component of purified amyloid fibrils. Fibrils are resistant to boiling in 2% (weight/vol) SDS and require &gt;90% (vol/vol) formic acid to dissolve.

Its subcellular location is the fimbrium. It localises to the secreted. In terms of biological role, a minor component of the functional amyloid in this bacterium. Probably nucleates fibril formation; FapB nucleates fibrillation its own, FapA inhibits FapB fibril elongation. Upon overexpression of the endogenous six-gene locus (fapA-fapF) in situ, cells form large clumps during liquid growth, make large amounts of biofilm and produce amyloid fibrils. Expression of the 6 gene operon in E.coli strain BL21(DE3) induces flocculation and biofilm formation with copious extracellular fibrils. In Pseudomonas fluorescens, this protein is Functional amyloid subunit FapB.